A 492-amino-acid polypeptide reads, in one-letter code: Bifunctional purine biosynthesis protein PurH (492 aa).

The region spanning 1–144 is the MGS-like domain; sequence MKKAILSVSN…KNYKHVTTIV (144 aa).

The protein belongs to the PurH family.

It catalyses the reaction (6R)-10-formyltetrahydrofolate + 5-amino-1-(5-phospho-beta-D-ribosyl)imidazole-4-carboxamide = 5-formamido-1-(5-phospho-D-ribosyl)imidazole-4-carboxamide + (6S)-5,6,7,8-tetrahydrofolate. It carries out the reaction IMP + H2O = 5-formamido-1-(5-phospho-D-ribosyl)imidazole-4-carboxamide. Its pathway is purine metabolism; IMP biosynthesis via de novo pathway; 5-formamido-1-(5-phospho-D-ribosyl)imidazole-4-carboxamide from 5-amino-1-(5-phospho-D-ribosyl)imidazole-4-carboxamide (10-formyl THF route): step 1/1. The protein operates within purine metabolism; IMP biosynthesis via de novo pathway; IMP from 5-formamido-1-(5-phospho-D-ribosyl)imidazole-4-carboxamide: step 1/1. This Staphylococcus aureus (strain USA300) protein is Bifunctional purine biosynthesis protein PurH.